Here is a 943-residue protein sequence, read N- to C-terminus: Isoleucine--tRNA ligase (943 aa).

The 'HIGH' region signature appears at 58-68 (PYANGSIHIGH). Glutamate 567 is an L-isoleucyl-5'-AMP binding site. The 'KMSKS' region motif lies at 608–612 (KMSKS). Lysine 611 provides a ligand contact to ATP. Zn(2+) contacts are provided by cysteine 906, cysteine 909, cysteine 926, and cysteine 929.

Belongs to the class-I aminoacyl-tRNA synthetase family. IleS type 1 subfamily. In terms of assembly, monomer. The cofactor is Zn(2+).

Its subcellular location is the cytoplasm. The catalysed reaction is tRNA(Ile) + L-isoleucine + ATP = L-isoleucyl-tRNA(Ile) + AMP + diphosphate. Functionally, catalyzes the attachment of isoleucine to tRNA(Ile). As IleRS can inadvertently accommodate and process structurally similar amino acids such as valine, to avoid such errors it has two additional distinct tRNA(Ile)-dependent editing activities. One activity is designated as 'pretransfer' editing and involves the hydrolysis of activated Val-AMP. The other activity is designated 'posttransfer' editing and involves deacylation of mischarged Val-tRNA(Ile). The sequence is that of Isoleucine--tRNA ligase from Pseudomonas fluorescens (strain ATCC BAA-477 / NRRL B-23932 / Pf-5).